Consider the following 124-residue polypeptide: Secretion system apparatus protein SsaP (124 aa).

In Salmonella typhi, this protein is Secretion system apparatus protein SsaP (ssaP).